The following is a 50-amino-acid chain: Photosystem II reaction center protein M (50 aa).

Residues 7–27 (GFVASLLFVGIPTIFLIGLFI) traverse the membrane as a helical segment.

This sequence belongs to the PsbM family. As to quaternary structure, PSII is composed of 1 copy each of membrane proteins PsbA, PsbB, PsbC, PsbD, PsbE, PsbF, PsbH, PsbI, PsbJ, PsbK, PsbL, PsbM, PsbT, PsbX, PsbY, Psb30/Ycf12, peripheral proteins PsbO, CyanoQ (PsbQ), PsbU, PsbV and a large number of cofactors. It forms dimeric complexes.

It is found in the cellular thylakoid membrane. One of the components of the core complex of photosystem II (PSII). PSII is a light-driven water:plastoquinone oxidoreductase that uses light energy to abstract electrons from H(2)O, generating O(2) and a proton gradient subsequently used for ATP formation. It consists of a core antenna complex that captures photons, and an electron transfer chain that converts photonic excitation into a charge separation. This subunit is found at the monomer-monomer interface. This is Photosystem II reaction center protein M from Prochlorococcus marinus subsp. pastoris (strain CCMP1986 / NIES-2087 / MED4).